Here is a 143-residue protein sequence, read N- to C-terminus: 3-dehydroquinate dehydratase (143 aa).

Residue Tyr23 is the Proton acceptor of the active site. The substrate site is built by Asn74, His80, and Asp87. Residue His100 is the Proton donor of the active site. Substrate-binding positions include Ile101–Ser102 and Arg111.

Belongs to the type-II 3-dehydroquinase family. In terms of assembly, homododecamer.

The catalysed reaction is 3-dehydroquinate = 3-dehydroshikimate + H2O. It functions in the pathway metabolic intermediate biosynthesis; chorismate biosynthesis; chorismate from D-erythrose 4-phosphate and phosphoenolpyruvate: step 3/7. Its function is as follows. Catalyzes a trans-dehydration via an enolate intermediate. The protein is 3-dehydroquinate dehydratase of Endomicrobium trichonymphae.